The following is a 169-amino-acid chain: Large ribosomal subunit protein uL10 (169 aa).

The protein belongs to the universal ribosomal protein uL10 family. As to quaternary structure, part of the ribosomal stalk of the 50S ribosomal subunit. The N-terminus interacts with L11 and the large rRNA to form the base of the stalk. The C-terminus forms an elongated spine to which L12 dimers bind in a sequential fashion forming a multimeric L10(L12)X complex.

Forms part of the ribosomal stalk, playing a central role in the interaction of the ribosome with GTP-bound translation factors. This chain is Large ribosomal subunit protein uL10, found in Deinococcus geothermalis (strain DSM 11300 / CIP 105573 / AG-3a).